Here is a 957-residue protein sequence, read N- to C-terminus: Glycine dehydrogenase (decarboxylating) (957 aa).

Position 708 is an N6-(pyridoxal phosphate)lysine (Lys708).

Belongs to the GcvP family. As to quaternary structure, the glycine cleavage system is composed of four proteins: P, T, L and H. Pyridoxal 5'-phosphate is required as a cofactor.

It catalyses the reaction N(6)-[(R)-lipoyl]-L-lysyl-[glycine-cleavage complex H protein] + glycine + H(+) = N(6)-[(R)-S(8)-aminomethyldihydrolipoyl]-L-lysyl-[glycine-cleavage complex H protein] + CO2. The glycine cleavage system catalyzes the degradation of glycine. The P protein binds the alpha-amino group of glycine through its pyridoxal phosphate cofactor; CO(2) is released and the remaining methylamine moiety is then transferred to the lipoamide cofactor of the H protein. The chain is Glycine dehydrogenase (decarboxylating) from Shigella boydii serotype 18 (strain CDC 3083-94 / BS512).